Consider the following 163-residue polypeptide: Probable RNA-binding protein EIF1AD (163 aa).

Residues 18–96 (MMEDDYELPT…VKAEISKILT (79 aa)) enclose the S1-like domain. The interval 106–163 (AGIWPERFAKNPPQEAKAQNDDEDSDFEDDLTPNTNRPVQESDEEDEDTDTESSDEED) is disordered. Acidic residues-rich tracts occupy residues 126-136 (DDEDSDFEDDL) and 146-163 (ESDEEDEDTDTESSDEED).

This sequence belongs to the EIF1AD family.

The chain is Probable RNA-binding protein EIF1AD from Drosophila pseudoobscura pseudoobscura (Fruit fly).